We begin with the raw amino-acid sequence, 224 residues long: Biosynthetic peptidoglycan transglycosylase (224 aa).

The helical transmembrane segment at 12–32 (ILVVLAILPVFLLLVYSLPFV) threads the bilayer.

It belongs to the glycosyltransferase 51 family.

It localises to the cell inner membrane. The catalysed reaction is [GlcNAc-(1-&gt;4)-Mur2Ac(oyl-L-Ala-gamma-D-Glu-L-Lys-D-Ala-D-Ala)](n)-di-trans,octa-cis-undecaprenyl diphosphate + beta-D-GlcNAc-(1-&gt;4)-Mur2Ac(oyl-L-Ala-gamma-D-Glu-L-Lys-D-Ala-D-Ala)-di-trans,octa-cis-undecaprenyl diphosphate = [GlcNAc-(1-&gt;4)-Mur2Ac(oyl-L-Ala-gamma-D-Glu-L-Lys-D-Ala-D-Ala)](n+1)-di-trans,octa-cis-undecaprenyl diphosphate + di-trans,octa-cis-undecaprenyl diphosphate + H(+). It participates in cell wall biogenesis; peptidoglycan biosynthesis. In terms of biological role, peptidoglycan polymerase that catalyzes glycan chain elongation from lipid-linked precursors. In Brucella suis biovar 1 (strain 1330), this protein is Biosynthetic peptidoglycan transglycosylase.